A 53-amino-acid chain; its full sequence is Large ribosomal subunit protein eL40 (53 aa).

It belongs to the eukaryotic ribosomal protein eL40 family.

The polypeptide is Large ribosomal subunit protein eL40 (Pyrobaculum arsenaticum (strain DSM 13514 / JCM 11321 / PZ6)).